Reading from the N-terminus, the 514-residue chain is 2,3-bisphosphoglycerate-independent phosphoglycerate mutase (514 aa).

Mn(2+) is bound by residues Asp14 and Ser64. Ser64 acts as the Phosphoserine intermediate in catalysis. Substrate contacts are provided by residues His125, 155 to 156 (RD), Arg187, Arg193, 263 to 266 (RADR), and Lys336. Residues Asp403, His407, Asp444, His445, and His463 each contribute to the Mn(2+) site.

Belongs to the BPG-independent phosphoglycerate mutase family. As to quaternary structure, monomer. It depends on Mn(2+) as a cofactor.

The catalysed reaction is (2R)-2-phosphoglycerate = (2R)-3-phosphoglycerate. It participates in carbohydrate degradation; glycolysis; pyruvate from D-glyceraldehyde 3-phosphate: step 3/5. Catalyzes the interconversion of 2-phosphoglycerate and 3-phosphoglycerate. The chain is 2,3-bisphosphoglycerate-independent phosphoglycerate mutase from Escherichia coli O1:K1 / APEC.